A 224-amino-acid chain; its full sequence is CMRF35-like molecule 6 (224 aa).

The first 20 residues, 1 to 20, serve as a signal peptide directing secretion; sequence MTARAWASWRSSALLLLLVP. The Extracellular portion of the chain corresponds to 21 to 183; the sequence is GYFPLSHPMT…HPGSLFSNVR (163 aa). One can recognise an Ig-like V-type domain in the interval 22-130; the sequence is YFPLSHPMTV…HDPIVEVEVS (109 aa). Disulfide bonds link Cys43–Cys110 and Cys57–Cys65. 2 N-linked (GlcNAc...) asparagine glycosylation sites follow: Asn90 and Asn99. The segment covering 136-151 has biased composition (polar residues); it reads TTTASSPQSSMGTSGP. A disordered region spans residues 136–174; the sequence is TTTASSPQSSMGTSGPPTKLPVHTWPSVTRKDSPEPSPH. A helical transmembrane segment spans residues 184–204; the sequence is FLLLVLLELPLLLSMLGAVLW. Topologically, residues 205–224 are cytoplasmic; sequence VNRPQRSSRSRQNWPKGENQ.

The protein belongs to the CD300 family. Present on the surface of monocytes, neutrophils, a proportion of peripheral blood T- and B-lymphocytes and lymphocytic cell lines.

It is found in the cell membrane. The sequence is that of CMRF35-like molecule 6 (CD300C) from Homo sapiens (Human).